The sequence spans 533 residues: Tyrosinase (533 aa).

The signal sequence occupies residues 1–18 (MFLAVLYCLLWSFQISDG). The Lumenal, melanosome segment spans residues 19–476 (HFPRACASSK…YLEQASRIWP (458 aa)). N-linked (GlcNAc...) asparagine glycans are attached at residues Asn86, Asn111, and Asn161. Cu cation-binding residues include His180, His202, and His211. 2 N-linked (GlcNAc...) asparagine glycosylation sites follow: Asn230 and Asn337. Cu cation contacts are provided by His363 and His367. Residue Asn371 is glycosylated (N-linked (GlcNAc...) asparagine). His390 contacts Cu cation. The helical transmembrane segment at 477 to 497 (WLLGAALVGAVIAAALSGLSS) threads the bilayer. Residues 498-533 (RLCLQKKKKKKQPQEERQPLLMDKDDYHSLLYQSHL) are Cytoplasmic-facing.

The protein belongs to the tyrosinase family. In terms of assembly, forms an OPN3-dependent complex with DCT in response to blue light in melanocytes. It depends on Cu(2+) as a cofactor. Post-translationally, glycosylated. In terms of tissue distribution, expressed in the skin.

Its subcellular location is the melanosome membrane. It is found in the melanosome. The enzyme catalyses 2 L-dopa + O2 = 2 L-dopaquinone + 2 H2O. It carries out the reaction L-tyrosine + O2 = L-dopaquinone + H2O. The catalysed reaction is 2 5,6-dihydroxyindole-2-carboxylate + O2 = 2 indole-5,6-quinone-2-carboxylate + 2 H2O. Functionally, this is a copper-containing oxidase that functions in the formation of pigments such as melanins and other polyphenolic compounds. Catalyzes the initial and rate limiting step in the cascade of reactions leading to melanin production from tyrosine. In addition to hydroxylating tyrosine to DOPA (3,4-dihydroxyphenylalanine), also catalyzes the oxidation of DOPA to DOPA-quinone, and possibly the oxidation of DHI (5,6-dihydroxyindole) to indole-5,6 quinone. The polypeptide is Tyrosinase (Tyr) (Mus musculus (Mouse)).